A 933-amino-acid chain; its full sequence is Phosphoenolpyruvate carboxylase (933 aa).

Active-site residues include His-158 and Lys-592.

The protein belongs to the PEPCase type 1 family. The cofactor is Mg(2+).

The enzyme catalyses oxaloacetate + phosphate = phosphoenolpyruvate + hydrogencarbonate. Functionally, forms oxaloacetate, a four-carbon dicarboxylic acid source for the tricarboxylic acid cycle. This is Phosphoenolpyruvate carboxylase from Nitrosomonas europaea (strain ATCC 19718 / CIP 103999 / KCTC 2705 / NBRC 14298).